The primary structure comprises 322 residues: 4-hydroxythreonine-4-phosphate dehydrogenase (322 aa).

Substrate-binding residues include histidine 126 and threonine 127. A divalent metal cation contacts are provided by histidine 160, histidine 205, and histidine 260. Substrate is bound by residues lysine 268, asparagine 277, and arginine 286.

The protein belongs to the PdxA family. Homodimer. Zn(2+) is required as a cofactor. Mg(2+) serves as cofactor. The cofactor is Co(2+).

It is found in the cytoplasm. The catalysed reaction is 4-(phosphooxy)-L-threonine + NAD(+) = 3-amino-2-oxopropyl phosphate + CO2 + NADH. It participates in cofactor biosynthesis; pyridoxine 5'-phosphate biosynthesis; pyridoxine 5'-phosphate from D-erythrose 4-phosphate: step 4/5. Functionally, catalyzes the NAD(P)-dependent oxidation of 4-(phosphooxy)-L-threonine (HTP) into 2-amino-3-oxo-4-(phosphooxy)butyric acid which spontaneously decarboxylates to form 3-amino-2-oxopropyl phosphate (AHAP). The protein is 4-hydroxythreonine-4-phosphate dehydrogenase of Paracoccus denitrificans (strain Pd 1222).